Reading from the N-terminus, the 85-residue chain is Putative defensin-like protein 79 (85 aa).

The N-terminal stretch at 1–31 is a signal peptide; the sequence is MKSEKSADAYGTYFLLISTIFLLFIARQASS. 4 disulfide bridges follow: C37–C69, C44–C60, C47–C67, and C51–C68.

This sequence belongs to the DEFL family.

The protein localises to the secreted. The polypeptide is Putative defensin-like protein 79 (Arabidopsis thaliana (Mouse-ear cress)).